An 805-amino-acid polypeptide reads, in one-letter code: Nitrite reductase [NAD(P)H] (805 aa).

43-79 (YNRILLSKVLQGDTDIKDITLNDWDWYEENNIQLYTN) is a binding site for FAD. Residue 193 to 223 (LQNELEKQGMTFLLEKQTEEIVGDDRVEGLR) participates in NADP(+) binding. 4 residues coordinate [2Fe-2S] cluster: C418, C420, C453, and C456. C635, C641, C675, and C679 together coordinate [4Fe-4S] cluster. Siroheme is bound at residue C679.

It belongs to the nitrite and sulfite reductase 4Fe-4S domain family. In terms of assembly, homodimer. The cofactor is siroheme. It depends on [2Fe-2S] cluster as a cofactor. Requires [4Fe-4S] cluster as cofactor. FAD is required as a cofactor.

The catalysed reaction is NH4(+) + 3 NADP(+) + 2 H2O = nitrite + 3 NADPH + 5 H(+). It catalyses the reaction NH4(+) + 3 NAD(+) + 2 H2O = nitrite + 3 NADH + 5 H(+). It participates in nitrogen metabolism; nitrate reduction (assimilation). Its function is as follows. Required for nitrite assimilation. The chain is Nitrite reductase [NAD(P)H] (nasD) from Bacillus subtilis (strain 168).